The following is an 853-amino-acid chain: E3 ubiquitin-protein ligase ZNRF3 (853 aa).

The signal sequence occupies residues Met1–Ala28. Residues Lys29–Met192 are Extracellular-facing. Residues Gly193–Ile213 form a helical membrane-spanning segment. Topologically, residues Lys214 to Asp853 are cytoplasmic. The RING-type; atypical zinc-finger motif lies at Cys266–Arg307. Disordered stretches follow at residues Ser583–Ser629, Ser650–Glu673, Gly685–Tyr713, and Thr834–Asp853. Residues Thr589–Arg607 show a composition bias toward gly residues. Polar residues predominate over residues His615 to Ser629.

The protein belongs to the ZNRF3 family.

It localises to the cell membrane. It catalyses the reaction S-ubiquitinyl-[E2 ubiquitin-conjugating enzyme]-L-cysteine + [acceptor protein]-L-lysine = [E2 ubiquitin-conjugating enzyme]-L-cysteine + N(6)-ubiquitinyl-[acceptor protein]-L-lysine.. It functions in the pathway protein modification; protein ubiquitination. E3 ubiquitin-protein ligase that acts as a negative regulator of the Wnt signaling pathway by mediating the ubiquitination and subsequent degradation of Wnt receptor complex components. Along with RSPO2 and RNF43, constitutes a master switch that governs limb specification. This is E3 ubiquitin-protein ligase ZNRF3 (znrf3) from Xenopus tropicalis (Western clawed frog).